The following is a 306-amino-acid chain: Pantothenate kinase (306 aa).

91 to 98 provides a ligand contact to ATP; that stretch reads GSVAVGKS.

The protein belongs to the prokaryotic pantothenate kinase family.

It localises to the cytoplasm. It carries out the reaction (R)-pantothenate + ATP = (R)-4'-phosphopantothenate + ADP + H(+). The protein operates within cofactor biosynthesis; coenzyme A biosynthesis; CoA from (R)-pantothenate: step 1/5. The chain is Pantothenate kinase from Streptococcus pneumoniae serotype 19F (strain G54).